A 420-amino-acid polypeptide reads, in one-letter code: Gamma-glutamyl phosphate reductase (420 aa).

This sequence belongs to the gamma-glutamyl phosphate reductase family.

It is found in the cytoplasm. It catalyses the reaction L-glutamate 5-semialdehyde + phosphate + NADP(+) = L-glutamyl 5-phosphate + NADPH + H(+). Its pathway is amino-acid biosynthesis; L-proline biosynthesis; L-glutamate 5-semialdehyde from L-glutamate: step 2/2. In terms of biological role, catalyzes the NADPH-dependent reduction of L-glutamate 5-phosphate into L-glutamate 5-semialdehyde and phosphate. The product spontaneously undergoes cyclization to form 1-pyrroline-5-carboxylate. The polypeptide is Gamma-glutamyl phosphate reductase (Streptococcus sanguinis (strain SK36)).